Consider the following 263-residue polypeptide: 3-methyl-2-oxobutanoate hydroxymethyltransferase (263 aa).

Positions 45 and 84 each coordinate Mg(2+). Residues 45–46 (DS), aspartate 84, and lysine 112 contribute to the 3-methyl-2-oxobutanoate site. Glutamate 114 lines the Mg(2+) pocket. The active-site Proton acceptor is the glutamate 180.

It belongs to the PanB family. Homodecamer; pentamer of dimers. Mg(2+) serves as cofactor.

Its subcellular location is the cytoplasm. The catalysed reaction is 3-methyl-2-oxobutanoate + (6R)-5,10-methylene-5,6,7,8-tetrahydrofolate + H2O = 2-dehydropantoate + (6S)-5,6,7,8-tetrahydrofolate. It functions in the pathway cofactor biosynthesis; (R)-pantothenate biosynthesis; (R)-pantoate from 3-methyl-2-oxobutanoate: step 1/2. Functionally, catalyzes the reversible reaction in which hydroxymethyl group from 5,10-methylenetetrahydrofolate is transferred onto alpha-ketoisovalerate to form ketopantoate. The protein is 3-methyl-2-oxobutanoate hydroxymethyltransferase of Salmonella enteritidis PT4 (strain P125109).